The following is a 412-amino-acid chain: Serine hydroxymethyltransferase (412 aa).

(6S)-5,6,7,8-tetrahydrofolate-binding positions include L112 and 116 to 118 (GHL). K221 carries the post-translational modification N6-(pyridoxal phosphate)lysine. A (6S)-5,6,7,8-tetrahydrofolate-binding site is contributed by E237.

Belongs to the SHMT family. In terms of assembly, homodimer. Requires pyridoxal 5'-phosphate as cofactor.

Its subcellular location is the cytoplasm. The catalysed reaction is (6R)-5,10-methylene-5,6,7,8-tetrahydrofolate + glycine + H2O = (6S)-5,6,7,8-tetrahydrofolate + L-serine. The protein operates within one-carbon metabolism; tetrahydrofolate interconversion. It participates in amino-acid biosynthesis; glycine biosynthesis; glycine from L-serine: step 1/1. Catalyzes the reversible interconversion of serine and glycine with tetrahydrofolate (THF) serving as the one-carbon carrier. This reaction serves as the major source of one-carbon groups required for the biosynthesis of purines, thymidylate, methionine, and other important biomolecules. Also exhibits THF-independent aldolase activity toward beta-hydroxyamino acids, producing glycine and aldehydes, via a retro-aldol mechanism. This chain is Serine hydroxymethyltransferase, found in Malacoplasma penetrans (strain HF-2) (Mycoplasma penetrans).